A 552-amino-acid polypeptide reads, in one-letter code: Non-structural protein NS1 (552 aa).

This sequence belongs to the orbivirus non-structural protein NS1 family.

The chain is Non-structural protein NS1 (Segment-5) from Antilocapra americana (Pronghorn).